The chain runs to 493 residues: Cytochrome P450 2W1 (493 aa).

Residues 1–23 form the signal peptide; sequence MALLLLGVWGILLLLGLWGLLQG. N-linked (GlcNAc...) asparagine glycosylation is present at asparagine 180. Heme is bound at residue cysteine 436.

Belongs to the cytochrome P450 family. Requires heme as cofactor. As to expression, detected in colon, ileum, and testes.

The protein localises to the endoplasmic reticulum lumen. The protein resides in the cell membrane. Its subcellular location is the microsome membrane. The catalysed reaction is all-trans-retinoate + reduced [NADPH--hemoprotein reductase] + O2 = all-trans-4-hydroxyretinoate + oxidized [NADPH--hemoprotein reductase] + H2O + H(+). The enzyme catalyses 1-(9Z-octadecenoyl)-sn-glycero-3-phosphocholine + reduced [NADPH--hemoprotein reductase] + O2 = 1-[8-hydroxy-(9Z)-octadecenoyl]-sn-glycero-3-phosphocholine + oxidized [NADPH--hemoprotein reductase] + H2O + H(+). It carries out the reaction 1-(9Z-octadecenoyl)-sn-glycero-3-phosphocholine + reduced [NADPH--hemoprotein reductase] + O2 = 1-[11-hydroxy-(9Z)-octadecenoyl]-sn-glycero-3-phosphocholine + oxidized [NADPH--hemoprotein reductase] + H2O + H(+). It catalyses the reaction 1-(9Z-octadecenoyl)-sn-glycero-3-phosphocholine + reduced [NADPH--hemoprotein reductase] + O2 = 1-[(9S,10R)-epoxy-octadecanoyl]-sn-glycero-3-phosphocholine + oxidized [NADPH--hemoprotein reductase] + H2O + H(+). The catalysed reaction is 1-(9Z-octadecenoyl)-sn-glycero-3-phosphocholine + reduced [NADPH--hemoprotein reductase] + O2 = 1-[(9R,10S)-epoxy-octadecanoyl]-sn-glycero-3-phosphocholine + oxidized [NADPH--hemoprotein reductase] + H2O + H(+). In terms of biological role, a cytochrome P450 monooxygenase that may play a role in retinoid and phospholipid metabolism. Catalyzes the hydroxylation of saturated carbon hydrogen bonds. Hydroxylates all trans-retinoic acid (atRA) to 4-hydroxyretinoate and may regulate atRA clearance. Other retinoids such as all-trans retinol and all-trans retinal are potential endogenous substrates. Catalyzes both epoxidation of double bonds and hydroxylation of carbon hydrogen bonds of the fatty acyl chain of 1-acylphospholipids/2-lysophospholipids. Can metabolize various lysophospholipids classes including lysophosphatidylcholines (LPCs), lysophosphatidylinositols (LPIs), lysophosphatidylserines (LPSs), lysophosphatidylglycerols (LPGs), lysophosphatidylethanolamines (LPEs) and lysophosphatidic acids (LPAs). Has low or no activity toward 2-acylphospholipids/1-lysophospholipids, diacylphospholipids and free fatty acids. May play a role in tumorigenesis by activating procarcinogens such as aflatoxin B1, polycyclic aromatic hydrocarbon dihydrodiols and aromatic amines. Mechanistically, uses molecular oxygen inserting one oxygen atom into a substrate, and reducing the second into a water molecule, with two electrons provided by NADPH via cytochrome P450 reductase (CPR; NADPH-ferrihemoprotein reductase). The chain is Cytochrome P450 2W1 (Cyp2w1) from Mus musculus (Mouse).